The chain runs to 180 residues: Ribosome maturation factor RimM (180 aa).

A PRC barrel domain is found at 99–172 (EDEFYQVDLI…FLVVDPVAAG (74 aa)).

The protein belongs to the RimM family. Binds ribosomal protein uS19.

The protein localises to the cytoplasm. In terms of biological role, an accessory protein needed during the final step in the assembly of 30S ribosomal subunit, possibly for assembly of the head region. Essential for efficient processing of 16S rRNA. May be needed both before and after RbfA during the maturation of 16S rRNA. It has affinity for free ribosomal 30S subunits but not for 70S ribosomes. This Bartonella henselae (strain ATCC 49882 / DSM 28221 / CCUG 30454 / Houston 1) (Rochalimaea henselae) protein is Ribosome maturation factor RimM.